The sequence spans 522 residues: Type-2 serine--tRNA ligase (522 aa).

A319 provides a ligand contact to L-serine. C321 lines the Zn(2+) pocket. R350 contributes to the L-serine binding site. ATP-binding positions include 350 to 352 (RWE) and 361 to 362 (RV). Residue 367-369 (RIE) coordinates L-serine. Positions 369 and 476 each coordinate Zn(2+). R483 contributes to the ATP binding site.

Belongs to the class-II aminoacyl-tRNA synthetase family. Type-2 seryl-tRNA synthetase subfamily. Homodimer. Zn(2+) is required as a cofactor.

Its subcellular location is the cytoplasm. It catalyses the reaction tRNA(Ser) + L-serine + ATP = L-seryl-tRNA(Ser) + AMP + diphosphate + H(+). The catalysed reaction is tRNA(Sec) + L-serine + ATP = L-seryl-tRNA(Sec) + AMP + diphosphate + H(+). Its pathway is aminoacyl-tRNA biosynthesis; selenocysteinyl-tRNA(Sec) biosynthesis; L-seryl-tRNA(Sec) from L-serine and tRNA(Sec): step 1/1. Catalyzes the attachment of serine to tRNA(Ser). Is also able to aminoacylate tRNA(Sec) with serine, to form the misacylated tRNA L-seryl-tRNA(Sec), which will be further converted into selenocysteinyl-tRNA(Sec). In Methanococcus aeolicus (strain ATCC BAA-1280 / DSM 17508 / OCM 812 / Nankai-3), this protein is Type-2 serine--tRNA ligase (serS).